The sequence spans 268 residues: ClpXP adapter protein SpxH (268 aa).

It belongs to the SpxH family. As to quaternary structure, interacts with Spx.

Its subcellular location is the cytoplasm. In terms of biological role, adapter protein required for efficient degradation of Spx by ClpXP under non-stress conditions. Interaction with Spx stabilizes Spx and exposes the C-terminus of Spx for recognition and proteolysis by ClpXP. The sequence is that of ClpXP adapter protein SpxH from Staphylococcus aureus (strain MRSA252).